We begin with the raw amino-acid sequence, 499 residues long: UDP-N-acetylmuramoylalanine--D-glutamate ligase (499 aa).

129–135 (GTNGKTT) provides a ligand contact to ATP.

The protein belongs to the MurCDEF family.

Its subcellular location is the cytoplasm. It catalyses the reaction UDP-N-acetyl-alpha-D-muramoyl-L-alanine + D-glutamate + ATP = UDP-N-acetyl-alpha-D-muramoyl-L-alanyl-D-glutamate + ADP + phosphate + H(+). The protein operates within cell wall biogenesis; peptidoglycan biosynthesis. Functionally, cell wall formation. Catalyzes the addition of glutamate to the nucleotide precursor UDP-N-acetylmuramoyl-L-alanine (UMA). The polypeptide is UDP-N-acetylmuramoylalanine--D-glutamate ligase (Ralstonia nicotianae (strain ATCC BAA-1114 / GMI1000) (Ralstonia solanacearum)).